A 660-amino-acid polypeptide reads, in one-letter code: Methionine--tRNA ligase (660 aa).

Positions 11 to 21 (PYANGPCHLGH) match the 'HIGH' region motif. Zn(2+) is bound by residues cysteine 143, cysteine 146, cysteine 155, and cysteine 158. A 'KMSKS' region motif is present at residues 325 to 329 (KMSTS). Threonine 328 serves as a coordination point for ATP. The region spanning 563-660 (DFDKVVIKIG…DECEVGERIQ (98 aa)) is the tRNA-binding domain.

It belongs to the class-I aminoacyl-tRNA synthetase family. MetG type 1 subfamily. In terms of assembly, homodimer. The cofactor is Zn(2+).

It is found in the cytoplasm. The enzyme catalyses tRNA(Met) + L-methionine + ATP = L-methionyl-tRNA(Met) + AMP + diphosphate. Its function is as follows. Is required not only for elongation of protein synthesis but also for the initiation of all mRNA translation through initiator tRNA(fMet) aminoacylation. In Methanobrevibacter smithii (strain ATCC 35061 / DSM 861 / OCM 144 / PS), this protein is Methionine--tRNA ligase.